A 392-amino-acid chain; its full sequence is Alaserpin (392 aa).

Positions 1–16 (MKIIMCIFGLAALAMA) are cleaved as a signal peptide. N85 carries an N-linked (GlcNAc...) asparagine glycan.

The protein belongs to the serpin family. Hemolymph.

The protein resides in the secreted. The protein localises to the extracellular space. Its function is as follows. Inhibits elastase. This is Alaserpin from Manduca sexta (Tobacco hawkmoth).